Reading from the N-terminus, the 688-residue chain is Potassium-transporting ATPase ATP-binding subunit (688 aa).

The next 4 helical transmembrane spans lie at 34–54 (PVMF…LAIL), 62–82 (ALFT…ANFA), 219–239 (VALT…TATL), and 260–280 (VLVA…LSAI). Residue Asp313 is the 4-aspartylphosphate intermediate of the active site. ATP contacts are provided by residues Asp350, Glu354, 383-390 (FSAQTRMS), and Lys401. The Mg(2+) site is built by Asp524 and Asp528. 3 helical membrane-spanning segments follow: residues 594 to 614 (FAII…LNVM), 622 to 642 (AILS…PLAL), and 667 to 687 (GLLV…ALIM).

It belongs to the cation transport ATPase (P-type) (TC 3.A.3) family. Type IA subfamily. As to quaternary structure, the system is composed of three essential subunits: KdpA, KdpB and KdpC.

It localises to the cell inner membrane. It catalyses the reaction K(+)(out) + ATP + H2O = K(+)(in) + ADP + phosphate + H(+). In terms of biological role, part of the high-affinity ATP-driven potassium transport (or Kdp) system, which catalyzes the hydrolysis of ATP coupled with the electrogenic transport of potassium into the cytoplasm. This subunit is responsible for energy coupling to the transport system and for the release of the potassium ions to the cytoplasm. This chain is Potassium-transporting ATPase ATP-binding subunit, found in Yersinia enterocolitica serotype O:8 / biotype 1B (strain NCTC 13174 / 8081).